A 762-amino-acid chain; its full sequence is FAST kinase domain-containing protein 5, mitochondrial (762 aa).

Ser-95 is modified (phosphoserine). Lys-506 carries the post-translational modification N6-acetyllysine. Positions 695-755 (LAIQFTNKNQ…RLEKLAYLHE (61 aa)) constitute an RAP domain.

It belongs to the FAST kinase family. As to quaternary structure, found in a complex with GRSF1, DDX28, DHX30 and FASTKD2. Associates with the 12S mitochondrial rRNA (12S mt-rRNA). Expression detected in spleen, testis, colon, heart, smooth muscle, kidney, brain, lung, liver, brown and white adipose tissue.

Its subcellular location is the mitochondrion matrix. It localises to the mitochondrion nucleoid. Plays an important role in the processing of non-canonical mitochondrial mRNA precursors. The chain is FAST kinase domain-containing protein 5, mitochondrial (Fastkd5) from Mus musculus (Mouse).